A 453-amino-acid polypeptide reads, in one-letter code: Ribosomal protein uS12 methylthiotransferase RimO (453 aa).

In terms of domain architecture, MTTase N-terminal spans 5–120; it reads PKVGFVSLGC…VMQAVHSHLP (116 aa). [4Fe-4S] cluster contacts are provided by C14, C50, C79, C151, C155, and C158. A Radical SAM core domain is found at 137 to 382; it reads LTPRHYAYLK…MEVAEEVSAQ (246 aa). The region spanning 385–453 is the TRAM domain; it reads QRKVGKTLKV…ADGHDLWGEV (69 aa).

Belongs to the methylthiotransferase family. RimO subfamily. Requires [4Fe-4S] cluster as cofactor.

The protein resides in the cytoplasm. It catalyses the reaction L-aspartate(89)-[ribosomal protein uS12]-hydrogen + (sulfur carrier)-SH + AH2 + 2 S-adenosyl-L-methionine = 3-methylsulfanyl-L-aspartate(89)-[ribosomal protein uS12]-hydrogen + (sulfur carrier)-H + 5'-deoxyadenosine + L-methionine + A + S-adenosyl-L-homocysteine + 2 H(+). Its function is as follows. Catalyzes the methylthiolation of an aspartic acid residue of ribosomal protein uS12. The protein is Ribosomal protein uS12 methylthiotransferase RimO of Burkholderia ambifaria (strain ATCC BAA-244 / DSM 16087 / CCUG 44356 / LMG 19182 / AMMD) (Burkholderia cepacia (strain AMMD)).